A 909-amino-acid polypeptide reads, in one-letter code: UPF0182 protein H16_A1615 (909 aa).

A run of 7 helical transmembrane segments spans residues 16-36 (TWVV…GLVV), 58-78 (ALLF…SGWL), 114-134 (VAVL…AIAL), 169-189 (WLLL…GLRG), 205-225 (ATHG…SYWL), 246-266 (VHVG…AAAA), and 281-301 (AAAL…PALF).

Belongs to the UPF0182 family.

It is found in the cell membrane. The polypeptide is UPF0182 protein H16_A1615 (Cupriavidus necator (strain ATCC 17699 / DSM 428 / KCTC 22496 / NCIMB 10442 / H16 / Stanier 337) (Ralstonia eutropha)).